Here is a 534-residue protein sequence, read N- to C-terminus: Protoheme IX farnesyltransferase (534 aa).

The tract at residues 1 to 251 is unknown; sequence MRREHARAIL…VLLEGKPSLL (251 aa). 15 helical membrane-spanning segments follow: residues 17–37, 39–59, 83–103, 128–148, 163–183, 197–217, 261–281, 284–304, 339–359, 360–380, 384–404, 411–431, 457–477, 479–499, and 508–528; these read PWLL…GGIV, ALTG…ALAI, YLTL…FGAI, LALA…ALAV, VAWA…QVLL, LMHL…TTLA, GVIS…PAGI, LSLV…SHSI, IALG…LAAI, LALA…KRTS, IVIG…AVTG, LLLW…LALI, IVIY…LGML, WAYL…ALKL, and AWAL…AMAV. Positions 252 to 530 are protoheme IX prenyltransferase; sequence KDYISLTKPG…ILFVAMAVDR (279 aa).

It in the C-terminal section; belongs to the UbiA prenyltransferase family. Protoheme IX farnesyltransferase subfamily.

It is found in the cell membrane. It carries out the reaction heme b + (2E,6E)-farnesyl diphosphate + H2O = Fe(II)-heme o + diphosphate. The protein operates within porphyrin-containing compound metabolism; heme O biosynthesis; heme O from protoheme: step 1/1. Functionally, converts heme B (protoheme IX) to heme O by substitution of the vinyl group on carbon 2 of heme B porphyrin ring with a hydroxyethyl farnesyl side group. In Roseiflexus sp. (strain RS-1), this protein is Protoheme IX farnesyltransferase (ctaB).